The sequence spans 93 residues: Cell division protein FtsB (93 aa).

Topologically, residues 1-3 are cytoplasmic; the sequence is MRL. The helical transmembrane segment at 4-21 threads the bilayer; it reads FILVLTLLFGWLQYTLWF. Over 22-93 the chain is Periplasmic; it reads GKNGVSDYYT…FYRIVGEENQ (72 aa). A coiled-coil region spans residues 42 to 75; it reads VNTKLQARNSEMYAEIDDLKQGLDAIEERARHEL.

Belongs to the FtsB family. As to quaternary structure, part of a complex composed of FtsB, FtsL and FtsQ.

Its subcellular location is the cell inner membrane. In terms of biological role, essential cell division protein. May link together the upstream cell division proteins, which are predominantly cytoplasmic, with the downstream cell division proteins, which are predominantly periplasmic. In Vibrio vulnificus (strain YJ016), this protein is Cell division protein FtsB.